A 213-amino-acid polypeptide reads, in one-letter code: Uridine kinase (213 aa).

15 to 22 (GASASGKS) is a binding site for ATP.

Belongs to the uridine kinase family.

Its subcellular location is the cytoplasm. It catalyses the reaction uridine + ATP = UMP + ADP + H(+). The catalysed reaction is cytidine + ATP = CMP + ADP + H(+). It functions in the pathway pyrimidine metabolism; CTP biosynthesis via salvage pathway; CTP from cytidine: step 1/3. The protein operates within pyrimidine metabolism; UMP biosynthesis via salvage pathway; UMP from uridine: step 1/1. The sequence is that of Uridine kinase from Sodalis glossinidius (strain morsitans).